A 223-amino-acid polypeptide reads, in one-letter code: Phosphoribosylformylglycinamidine synthase subunit PurQ (223 aa).

One can recognise a Glutamine amidotransferase type-1 domain in the interval 2 to 223 (KVAIIRFPGT…LLENFINFNF (222 aa)). Cys84 acts as the Nucleophile in catalysis. Residues His192 and Glu194 contribute to the active site.

As to quaternary structure, part of the FGAM synthase complex composed of 1 PurL, 1 PurQ and 2 PurS subunits.

It localises to the cytoplasm. It catalyses the reaction N(2)-formyl-N(1)-(5-phospho-beta-D-ribosyl)glycinamide + L-glutamine + ATP + H2O = 2-formamido-N(1)-(5-O-phospho-beta-D-ribosyl)acetamidine + L-glutamate + ADP + phosphate + H(+). The catalysed reaction is L-glutamine + H2O = L-glutamate + NH4(+). The protein operates within purine metabolism; IMP biosynthesis via de novo pathway; 5-amino-1-(5-phospho-D-ribosyl)imidazole from N(2)-formyl-N(1)-(5-phospho-D-ribosyl)glycinamide: step 1/2. Its function is as follows. Part of the phosphoribosylformylglycinamidine synthase complex involved in the purines biosynthetic pathway. Catalyzes the ATP-dependent conversion of formylglycinamide ribonucleotide (FGAR) and glutamine to yield formylglycinamidine ribonucleotide (FGAM) and glutamate. The FGAM synthase complex is composed of three subunits. PurQ produces an ammonia molecule by converting glutamine to glutamate. PurL transfers the ammonia molecule to FGAR to form FGAM in an ATP-dependent manner. PurS interacts with PurQ and PurL and is thought to assist in the transfer of the ammonia molecule from PurQ to PurL. The protein is Phosphoribosylformylglycinamidine synthase subunit PurQ of Campylobacter jejuni subsp. jejuni serotype O:2 (strain ATCC 700819 / NCTC 11168).